Reading from the N-terminus, the 595-residue chain is (E)-beta-ocimene synthase, chloroplastic (595 aa).

Residues Met-1 to Ser-32 constitute a chloroplast transit peptide. Positions 350 and 354 each coordinate Mn(2+). The short motif at Asp-350–Asp-354 is the DDXXD motif element. Homodimerization regions lie at residues Tyr-356–Leu-362 and Glu-428–Pro-465. Mn(2+) is bound by residues Asn-493 and Glu-501.

It belongs to the terpene synthase family. Homodimer. Mn(2+) is required as a cofactor. Mg(2+) serves as cofactor. Expressed in peltate glandular trichomes. Present in flowers, leaves and stems.

The protein resides in the plastid. It is found in the chloroplast. The enzyme catalyses (2E)-geranyl diphosphate = (E)-beta-ocimene + diphosphate. Its pathway is secondary metabolite biosynthesis; terpenoid biosynthesis. Its function is as follows. Involved in the biosynthesis of monoterpenes natural products. Monoterpene synthase that catalyzes mainly the formation of (E)-beta-ocimene and minor amounts of other monoterpenes (e.g. myrcene, (Z)-beta-ocimene, alpha- and gamma-terpinene) from geranyl diphosphate (GPP). This Origanum vulgare (Wild marjoram) protein is (E)-beta-ocimene synthase, chloroplastic.